Here is a 278-residue protein sequence, read N- to C-terminus: MKKIGAHVSVSGGVEMAPVNALGIGADAFALFTKNQRQWVAKPLSVESVTLFKENCEKEGFDARYVLPHDSYLINLGHPDEEGLEKSRAAFLDEMQRCELLGLKMLNFHPGSHLNKISIEKCLDRIAESVNMTLDKTTGVTAVIENTAGQGSNVGNEFWHLRYIIDKVEDKSRVGVCLDTCHTYTAGYDIVNEYDRVFTEFDEVVGRNYLCAIHLNDSKKPLGSRVDRHDSIGKGLIGIDFFRRFMQDSRFDDMPVILETPDDTIWRDEIKMLRSFES.

Zn(2+) contacts are provided by H69, H109, E145, D179, H182, H214, D227, H229, and E259.

The protein belongs to the AP endonuclease 2 family. It depends on Zn(2+) as a cofactor.

The catalysed reaction is Endonucleolytic cleavage to 5'-phosphooligonucleotide end-products.. Endonuclease IV plays a role in DNA repair. It cleaves phosphodiester bonds at apurinic or apyrimidinic (AP) sites, generating a 3'-hydroxyl group and a 5'-terminal sugar phosphate. The protein is Probable endonuclease 4 of Phocaeicola vulgatus (strain ATCC 8482 / DSM 1447 / JCM 5826 / CCUG 4940 / NBRC 14291 / NCTC 11154) (Bacteroides vulgatus).